A 169-amino-acid chain; its full sequence is Succinate dehydrogenase cytochrome b560 subunit, mitochondrial (169 aa).

Residues 1-29 (MAAFLLRHVSRHCLRAHLNAQLCIRNAAP) constitute a mitochondrion transit peptide. The Mitochondrial matrix portion of the chain corresponds to 30-62 (LGTTAKEEMERFWKKNTSSNRPLSPHLTIYKWS). A helical transmembrane segment spans residues 63–92 (LPMALSVCHRGSGIALSGGVSLFGLSALLL). At 93–112 (PGNFESYLMFVKSLCLGPTL) the chain is on the mitochondrial intermembrane side. The chain crosses the membrane as a helical span at residues 113-137 (IYSAKFVLVFPLMYHSLNGIRHLLW). His-127 provides a ligand contact to heme b. The Mitochondrial matrix segment spans residues 138–144 (DLGKGLA). A helical membrane pass occupies residues 145–166 (IPQVWLSGVAVVVLAVLSSGGL). The Mitochondrial intermembrane portion of the chain corresponds to 167–169 (AAL).

It belongs to the cytochrome b560 family. Component of complex II composed of four subunits: the flavoprotein (FP) SDHA, iron-sulfur protein (IP) SDHB, and a cytochrome b560 composed of SDHC and SDHD. Heme b is required as a cofactor.

It localises to the mitochondrion inner membrane. It participates in carbohydrate metabolism; tricarboxylic acid cycle. Membrane-anchoring subunit of succinate dehydrogenase (SDH) that is involved in complex II of the mitochondrial electron transport chain and is responsible for transferring electrons from succinate to ubiquinone (coenzyme Q). SDH also oxidizes malate to the non-canonical enol form of oxaloacetate, enol-oxaloacetate. Enol-oxaloacetate, which is a potent inhibitor of the succinate dehydrogenase activity, is further isomerized into keto-oxaloacetate. The chain is Succinate dehydrogenase cytochrome b560 subunit, mitochondrial (Sdhc) from Mus musculus (Mouse).